The following is a 234-amino-acid chain: Ubiquitin thioesterase OTUB2 (234 aa).

Residues 40–231 (TSIRKTKGDG…TSHYNILYAA (192 aa)) form the OTU domain. Residue Asp-48 is part of the active site. The active-site Nucleophile is Cys-51. Residues His-205 and His-224 contribute to the active site.

The protein belongs to the peptidase C65 family.

The catalysed reaction is Thiol-dependent hydrolysis of ester, thioester, amide, peptide and isopeptide bonds formed by the C-terminal Gly of ubiquitin (a 76-residue protein attached to proteins as an intracellular targeting signal).. In terms of biological role, hydrolase that can remove conjugated ubiquitin from proteins in vitro and may therefore play an important regulatory role at the level of protein turnover by preventing degradation. Mediates deubiquitination of 'Lys-11'-,'Lys-48'- and 'Lys-63'-linked polyubiquitin chains, with a preference for 'Lys-63'-linked polyubiquitin chains. This Mus musculus (Mouse) protein is Ubiquitin thioesterase OTUB2 (Otub2).